Here is a 351-residue protein sequence, read N- to C-terminus: GDSL esterase/lipase At4g26790 (351 aa).

The N-terminal stretch at 1–25 (MQRNRVLAFLLLAAQLLVKIPETCA) is a signal peptide. The active-site Nucleophile is Ser36. Residue Asn118 is glycosylated (N-linked (GlcNAc...) asparagine). Residues Asp326 and His329 contribute to the active site.

This sequence belongs to the 'GDSL' lipolytic enzyme family.

Its subcellular location is the secreted. This Arabidopsis thaliana (Mouse-ear cress) protein is GDSL esterase/lipase At4g26790.